A 433-amino-acid polypeptide reads, in one-letter code: 4-hydroxy-3-methylbut-2-en-1-yl diphosphate synthase (flavodoxin) (433 aa).

[4Fe-4S] cluster-binding residues include Cys-320, Cys-323, Cys-366, and Glu-373.

Belongs to the IspG family. Requires [4Fe-4S] cluster as cofactor.

It carries out the reaction (2E)-4-hydroxy-3-methylbut-2-enyl diphosphate + oxidized [flavodoxin] + H2O + 2 H(+) = 2-C-methyl-D-erythritol 2,4-cyclic diphosphate + reduced [flavodoxin]. It functions in the pathway isoprenoid biosynthesis; isopentenyl diphosphate biosynthesis via DXP pathway; isopentenyl diphosphate from 1-deoxy-D-xylulose 5-phosphate: step 5/6. Converts 2C-methyl-D-erythritol 2,4-cyclodiphosphate (ME-2,4cPP) into 1-hydroxy-2-methyl-2-(E)-butenyl 4-diphosphate. The polypeptide is 4-hydroxy-3-methylbut-2-en-1-yl diphosphate synthase (flavodoxin) (Beijerinckia indica subsp. indica (strain ATCC 9039 / DSM 1715 / NCIMB 8712)).